The sequence spans 300 residues: Porphobilinogen deaminase (300 aa).

Cysteine 239 carries the post-translational modification S-(dipyrrolylmethanemethyl)cysteine.

The protein belongs to the HMBS family. Monomer. The cofactor is dipyrromethane.

It catalyses the reaction 4 porphobilinogen + H2O = hydroxymethylbilane + 4 NH4(+). The protein operates within porphyrin-containing compound metabolism; protoporphyrin-IX biosynthesis; coproporphyrinogen-III from 5-aminolevulinate: step 2/4. Tetrapolymerization of the monopyrrole PBG into the hydroxymethylbilane pre-uroporphyrinogen in several discrete steps. The polypeptide is Porphobilinogen deaminase (Francisella tularensis subsp. holarctica (strain FTNF002-00 / FTA)).